We begin with the raw amino-acid sequence, 305 residues long: Ubiquinone biosynthesis protein COQ4 homolog, mitochondrial (305 aa).

4 residues coordinate Zn(2+): His-150, Asp-151, His-154, and Glu-166.

The protein belongs to the COQ4 family. In terms of assembly, component of a multi-subunit COQ enzyme complex. Zn(2+) is required as a cofactor.

The protein resides in the mitochondrion inner membrane. It carries out the reaction a 4-hydroxy-3-methoxy-5-(all-trans-polyprenyl)benzoate + H(+) = a 2-methoxy-6-(all-trans-polyprenyl)phenol + CO2. It functions in the pathway cofactor biosynthesis; ubiquinone biosynthesis. In terms of biological role, lyase that catalyzes the C1-decarboxylation of 4-hydroxy-3-methoxy-5-(all-trans-polyprenyl)benzoic acid into 2-methoxy-6-(all-trans-polyprenyl)phenol during ubiquinone biosynthesis. This Cryptosporidium parvum (strain Iowa II) protein is Ubiquinone biosynthesis protein COQ4 homolog, mitochondrial.